Consider the following 457-residue polypeptide: Bifunctional protein GlmU (457 aa).

A pyrophosphorylase region spans residues 1–227; that stretch reads MTQLSVVILA…FMEVEGANNR (227 aa). UDP-N-acetyl-alpha-D-glucosamine-binding positions include 9 to 12, lysine 23, glutamine 74, 79 to 80, 101 to 103, glycine 138, glutamate 152, asparagine 167, and asparagine 225; these read LAAG, GT, and YGD. Aspartate 103 is a binding site for Mg(2+). Asparagine 225 is a binding site for Mg(2+). Residues 228 to 248 form a linker region; it reads LQLAALERFYQKTQAEKLLLA. Residues 249 to 457 form an N-acetyltransferase region; that stretch reads GVRLIDPARF…QRPTKKKIAD (209 aa). Residues arginine 331 and lysine 349 each contribute to the UDP-N-acetyl-alpha-D-glucosamine site. Histidine 361 serves as the catalytic Proton acceptor. UDP-N-acetyl-alpha-D-glucosamine-binding residues include tyrosine 364 and asparagine 375. Acetyl-CoA-binding positions include alanine 378, 384 to 385, serine 403, alanine 421, and arginine 438; that span reads NY.

The protein in the N-terminal section; belongs to the N-acetylglucosamine-1-phosphate uridyltransferase family. This sequence in the C-terminal section; belongs to the transferase hexapeptide repeat family. As to quaternary structure, homotrimer. Mg(2+) is required as a cofactor.

It localises to the cytoplasm. The catalysed reaction is alpha-D-glucosamine 1-phosphate + acetyl-CoA = N-acetyl-alpha-D-glucosamine 1-phosphate + CoA + H(+). It catalyses the reaction N-acetyl-alpha-D-glucosamine 1-phosphate + UTP + H(+) = UDP-N-acetyl-alpha-D-glucosamine + diphosphate. It functions in the pathway nucleotide-sugar biosynthesis; UDP-N-acetyl-alpha-D-glucosamine biosynthesis; N-acetyl-alpha-D-glucosamine 1-phosphate from alpha-D-glucosamine 6-phosphate (route II): step 2/2. Its pathway is nucleotide-sugar biosynthesis; UDP-N-acetyl-alpha-D-glucosamine biosynthesis; UDP-N-acetyl-alpha-D-glucosamine from N-acetyl-alpha-D-glucosamine 1-phosphate: step 1/1. The protein operates within bacterial outer membrane biogenesis; LPS lipid A biosynthesis. Functionally, catalyzes the last two sequential reactions in the de novo biosynthetic pathway for UDP-N-acetylglucosamine (UDP-GlcNAc). The C-terminal domain catalyzes the transfer of acetyl group from acetyl coenzyme A to glucosamine-1-phosphate (GlcN-1-P) to produce N-acetylglucosamine-1-phosphate (GlcNAc-1-P), which is converted into UDP-GlcNAc by the transfer of uridine 5-monophosphate (from uridine 5-triphosphate), a reaction catalyzed by the N-terminal domain. This is Bifunctional protein GlmU from Actinobacillus pleuropneumoniae serotype 5b (strain L20).